We begin with the raw amino-acid sequence, 74 residues long: ATP synthase subunit c (74 aa).

Helical transmembrane passes span 8–28 (FIGV…VSNI) and 52–72 (IGAG…MLLI).

This sequence belongs to the ATPase C chain family. In terms of assembly, F-type ATPases have 2 components, F(1) - the catalytic core - and F(0) - the membrane proton channel. F(1) has five subunits: alpha(3), beta(3), gamma(1), delta(1), epsilon(1). F(0) has three main subunits: a(1), b(2) and c(10-14). The alpha and beta chains form an alternating ring which encloses part of the gamma chain. F(1) is attached to F(0) by a central stalk formed by the gamma and epsilon chains, while a peripheral stalk is formed by the delta and b chains.

Its subcellular location is the cell inner membrane. In terms of biological role, f(1)F(0) ATP synthase produces ATP from ADP in the presence of a proton or sodium gradient. F-type ATPases consist of two structural domains, F(1) containing the extramembraneous catalytic core and F(0) containing the membrane proton channel, linked together by a central stalk and a peripheral stalk. During catalysis, ATP synthesis in the catalytic domain of F(1) is coupled via a rotary mechanism of the central stalk subunits to proton translocation. Key component of the F(0) channel; it plays a direct role in translocation across the membrane. A homomeric c-ring of between 10-14 subunits forms the central stalk rotor element with the F(1) delta and epsilon subunits. This Rickettsia canadensis (strain McKiel) protein is ATP synthase subunit c.